The sequence spans 125 residues: Cytochrome c oxidase assembly factor 6 homolog (125 aa).

Gly-2 is subject to N-acetylalanine. The CHCH domain maps to 55–98 (RQVCWGARDEYWKCLDENLEDASQCKKLRSSFESSCPQQWIKYF). Positions 58–68 (CWGARDEYWKC) match the Cx9C motif motif. Disulfide bonds link Cys-58-Cys-90 and Cys-68-Cys-79. Residues 79–90 (CKKLRSSFESSC) carry the Cx10C motif motif.

This sequence belongs to the cytochrome c oxidase subunit 6B family. As to quaternary structure, interacts with COA1. Found in a complex with TMEM177, COX20, MT-CO2/COX2, COX18, SCO1 and SCO2. Interacts with MT-CO2/COX2 and SCO2. Interacts with SCO1. Interacts with COX20 in a MT-CO2/COX2- and COX18-dependent manner. Interacts with COX16.

It localises to the mitochondrion intermembrane space. Its function is as follows. Involved in the maturation of the mitochondrial respiratory chain complex IV subunit MT-CO2/COX2. Thereby, may regulate early steps of complex IV assembly. Mitochondrial respiratory chain complex IV or cytochrome c oxidase is the component of the respiratory chain that catalyzes the transfer of electrons from intermembrane space cytochrome c to molecular oxygen in the matrix and as a consequence contributes to the proton gradient involved in mitochondrial ATP synthesis. May also be required for efficient formation of respiratory supercomplexes comprised of complexes III and IV. The sequence is that of Cytochrome c oxidase assembly factor 6 homolog (COA6) from Homo sapiens (Human).